A 666-amino-acid polypeptide reads, in one-letter code: Putative cysteine-rich receptor-like protein kinase 31 (666 aa).

A signal peptide spans 1–23 (MCLNTLCAILCFVLTVSFGFVSA). Gnk2-homologous domains follow at residues 24–130 (QKCG…NNSF) and 136–245 (LEPT…GYKY). Over 24–280 (QKCGESVFFR…PDGKKISTGV (257 aa)) the chain is Extracellular. 5 N-linked (GlcNAc...) asparagine glycosylation sites follow: asparagine 52, asparagine 62, asparagine 104, asparagine 127, and asparagine 151. The helical transmembrane segment at 281–301 (IVAIVVSAVIFVVLVALGLVI) threads the bilayer. The Cytoplasmic portion of the chain corresponds to 302-666 (WKRRQSYKTL…SASITRATPR (365 aa)). Residues 339 to 616 (FSRNNKLGQG…IFQMLTNSSI (278 aa)) form the Protein kinase domain. Residues 345–353 (LGQGGFGEV) and lysine 367 each bind ATP. Tyrosine 412 bears the Phosphotyrosine mark. Catalysis depends on aspartate 464, which acts as the Proton acceptor. Serine 468 carries the post-translational modification Phosphoserine. The residue at position 504 (threonine 504) is a Phosphothreonine. Tyrosine 512 carries the post-translational modification Phosphotyrosine.

It belongs to the protein kinase superfamily. Ser/Thr protein kinase family. CRK subfamily.

The protein localises to the membrane. The enzyme catalyses L-seryl-[protein] + ATP = O-phospho-L-seryl-[protein] + ADP + H(+). It carries out the reaction L-threonyl-[protein] + ATP = O-phospho-L-threonyl-[protein] + ADP + H(+). The protein is Putative cysteine-rich receptor-like protein kinase 31 (CRK31) of Arabidopsis thaliana (Mouse-ear cress).